Here is a 172-residue protein sequence, read N- to C-terminus: Adenine phosphoribosyltransferase (172 aa).

The protein belongs to the purine/pyrimidine phosphoribosyltransferase family. Homodimer.

The protein localises to the cytoplasm. It carries out the reaction AMP + diphosphate = 5-phospho-alpha-D-ribose 1-diphosphate + adenine. It participates in purine metabolism; AMP biosynthesis via salvage pathway; AMP from adenine: step 1/1. In terms of biological role, catalyzes a salvage reaction resulting in the formation of AMP, that is energically less costly than de novo synthesis. This is Adenine phosphoribosyltransferase from Nostoc punctiforme (strain ATCC 29133 / PCC 73102).